Here is a 1030-residue protein sequence, read N- to C-terminus: MMS19 nucleotide excision repair protein homolog (1030 aa).

Ala2 is modified (N-acetylalanine). N6-acetyllysine is present on Lys496. 4 HEAT repeats span residues 866–904 (QRFFTDNVPALVQGFHAAPQDVKPNYLKGLSHVLNRLPK), 908–946 (LPELPTLLSLLLEALSCPDCVVQLSTLSCLQPLLLEAPQ), 949–987 (SLHVDTLVTKFLNLSSSPSMAVRIAALQCMHALTRLPTP), and 990–1028 (LPYKPQVIRALAKPLDDKKRLVRKEAVSARGEWFLLGSP). Ser1027 carries the post-translational modification Phosphoserine.

This sequence belongs to the MET18/MMS19 family. As to quaternary structure, component of the CIA complex. In the CIA complex, interacts directly with CIAO2B and CIAO3. Component of the MMXD complex, composed of CIAO1, ERCC2, CIAO2B, MMS19 and SLC25A5. Interacts with CIAO2B; the interaction is direct. Interacts with ERCC2/XPD; the interaction is direct. Interacts with ERCC3/XPB and NCOA3/RAC3. Interacts with RTEL1; the interaction mediates the association of RTEL1 with the CIA complex. Interacts with BRIP1. Interacts with KIF4A; the interaction facilitates the transfer of Fe-S clusters to KIF4A to ensure proper localization of KIF4A to the mitotic machinery components. Interacts with CCDC117; the interaction is indirect. Ubiquitinated; undergoes 'Lys-48'-linked polyubiquitination by MAGEF1-NSMCE1 ubiquitin ligase complex leading to proteasomal degradation. Ubiquitously expressed with higher expression in testis.

Its subcellular location is the nucleus. It localises to the cytoplasm. The protein localises to the cytoskeleton. The protein resides in the spindle. It is found in the microtubule organizing center. Its subcellular location is the centrosome. Key component of the cytosolic iron-sulfur protein assembly (CIA) complex, a multiprotein complex that mediates the incorporation of iron-sulfur cluster into apoproteins specifically involved in DNA metabolism and genomic integrity. In the CIA complex, MMS19 acts as an adapter between early-acting CIA components and a subset of cellular target iron-sulfur proteins such as ERCC2/XPD, FANCJ and RTEL1, thereby playing a key role in nucleotide excision repair (NER), homologous recombination-mediated double-strand break DNA repair, DNA replication and RNA polymerase II (POL II) transcription. As part of the mitotic spindle-associated MMXD complex, plays a role in chromosome segregation, probably by facilitating iron-sulfur (Fe-S) cluster assembly into ERCC2/XPD. Together with CIAO2, facilitates the transfer of Fe-S clusters to the motor protein KIF4A, which ensures proper localization of KIF4A to mitotic machinery components to promote the progression of mitosis. Indirectly acts as a transcriptional coactivator of estrogen receptor (ER), via its role in iron-sulfur insertion into some component of the TFIIH-machinery. This chain is MMS19 nucleotide excision repair protein homolog, found in Homo sapiens (Human).